We begin with the raw amino-acid sequence, 797 residues long: Kinesin-like protein Klp68D (797 aa).

The 326-residue stretch at 19–344 (CVQVVVRCRP…LRYASRAKSI (326 aa)) folds into the Kinesin motor domain. 106–113 (GQTGTGKT) provides a ligand contact to ATP. Residues 350 to 384 (KNEDPQDAKLKEYQEEIERLKRLIAPQQQQRSEKQ) are a coiled coil. Disordered stretches follow at residues 371-450 (RLIA…ELER), 610-656 (SSFP…PSSL), and 722-797 (ANSS…LVNK). The segment covering 386-396 (TIKKQRVKKPK) has biased composition (basic residues). The span at 417–431 (QVDEDRDSDGDGAES) shows a compositional bias: acidic residues. Positions 432–450 (ESDKENEAEVAKSNEELER) are enriched in basic and acidic residues. Residues 432–580 (ESDKENEAEV…LVKELKRQLL (149 aa)) adopt a coiled-coil conformation. Basic residues predominate over residues 626–638 (GYRRPVSHPQRRR). Residues 782–791 (KKPASAYPKA) show a composition bias toward low complexity.

The protein belongs to the TRAFAC class myosin-kinesin ATPase superfamily. Kinesin family. Kinesin II subfamily.

It is found in the cytoplasm. The protein localises to the cytoskeleton. In terms of biological role, plus-end directed microtubule motor that may be used for anterograde axonal transport and could conceivably move cargos in fly neurons different than those moved by kinesin heavy chain or other plus-end directed motors. The protein is Kinesin-like protein Klp68D of Drosophila pseudoobscura pseudoobscura (Fruit fly).